Reading from the N-terminus, the 91-residue chain is ATP synthase subunit c (91 aa).

Helical transmembrane passes span 4 to 24 and 53 to 73; these read FTMC…GTGI and IGLA…LIIL.

The protein belongs to the ATPase C chain family. In terms of assembly, F-type ATPases have 2 components, F(1) - the catalytic core - and F(0) - the membrane proton channel. F(1) has five subunits: alpha(3), beta(3), gamma(1), delta(1), epsilon(1). F(0) has three main subunits: a(1), b(2) and c(10-14). The alpha and beta chains form an alternating ring which encloses part of the gamma chain. F(1) is attached to F(0) by a central stalk formed by the gamma and epsilon chains, while a peripheral stalk is formed by the delta and b chains.

It localises to the cell inner membrane. Its function is as follows. F(1)F(0) ATP synthase produces ATP from ADP in the presence of a proton or sodium gradient. F-type ATPases consist of two structural domains, F(1) containing the extramembraneous catalytic core and F(0) containing the membrane proton channel, linked together by a central stalk and a peripheral stalk. During catalysis, ATP synthesis in the catalytic domain of F(1) is coupled via a rotary mechanism of the central stalk subunits to proton translocation. In terms of biological role, key component of the F(0) channel; it plays a direct role in translocation across the membrane. A homomeric c-ring of between 10-14 subunits forms the central stalk rotor element with the F(1) delta and epsilon subunits. The chain is ATP synthase subunit c from Citrifermentans bemidjiense (strain ATCC BAA-1014 / DSM 16622 / JCM 12645 / Bem) (Geobacter bemidjiensis).